The primary structure comprises 413 residues: MGTFCSVIKFENLQELKRLCHWGPIIALGVIAICSTMAMIDSVLWYWPLHTTGGSVNFIMLINWTVMILYNYFNAMFVGPGFVPLGWKPEISQDTMYLQYCKVCQAYKAPRSHHCRKCNRCVMKMDHHCPWINNCCGYQNHASFTLFLLLAPLGCIHAAFIFVMTMYTQLYHRLSFGWNTVKIDMSAARRDPLPIVPFGLAAFATTLFALGLALGTTIAVGMLFFIQMKIILRNKTSIESWIEEKAKDRIQYYQLDEVFVFPYDMGSRWRNFKQVFTWSGVPEGDGLEWPVREGCHQYSLTIEQLKQKADKRVRSVRYKVIEDYSGACCPLNKGIKTFFTSPCTEEPRIQLQKGEFILATRGLRYWLYGDKILDDSFIEGVSRIRGWFPRKCVEKCPCDAETDQAPEGEKKNR.

At 1–24 the chain is on the cytoplasmic side; it reads MGTFCSVIKFENLQELKRLCHWGP. The chain crosses the membrane as a helical span at residues 25–45; the sequence is IIALGVIAICSTMAMIDSVLW. The Lumenal portion of the chain corresponds to 46–57; that stretch reads YWPLHTTGGSVN. The chain crosses the membrane as a helical span at residues 58–78; that stretch reads FIMLINWTVMILYNYFNAMFV. The Cytoplasmic segment spans residues 79–143; sequence GPGFVPLGWK…NCCGYQNHAS (65 aa). Residues 99 to 149 enclose the DHHC domain; it reads QYCKVCQAYKAPRSHHCRKCNRCVMKMDHHCPWINNCCGYQNHASFTLFLL. The active-site S-palmitoyl cysteine intermediate is Cys-129. Residues 144 to 164 form a helical membrane-spanning segment; sequence FTLFLLLAPLGCIHAAFIFVM. The Lumenal portion of the chain corresponds to 165–205; that stretch reads TMYTQLYHRLSFGWNTVKIDMSAARRDPLPIVPFGLAAFAT. Residues 206–226 form a helical membrane-spanning segment; the sequence is TLFALGLALGTTIAVGMLFFI. Topologically, residues 227-413 are cytoplasmic; that stretch reads QMKIILRNKT…QAPEGEKKNR (187 aa). Residues 313 to 398 form the SH3 domain; the sequence is VRSVRYKVIE…PRKCVEKCPC (86 aa). Residues Cys-328, Cys-329, and Cys-343 are each lipidated (S-palmitoyl cysteine). The Di-lysine motif signature appears at 410-413; it reads KKNR.

This sequence belongs to the DHHC palmitoyltransferase family. As to quaternary structure, homooligomerizes. Interacts with SELENOK. Palmitoylated at 3 different sites by ZDHHC16. The combination of the different palmitoylation events strongly affects the quaternary assembly of ZDHHC6, its localization, stability and function. Palmitoylation at Cys-328 accelerates the turnover of ZDHHC6. Depalmitoylated by LYPLA2.

Its subcellular location is the endoplasmic reticulum membrane. The catalysed reaction is L-cysteinyl-[protein] + hexadecanoyl-CoA = S-hexadecanoyl-L-cysteinyl-[protein] + CoA. It carries out the reaction L-cysteinyl-[protein] + octadecanoyl-CoA = S-octadecanoyl-L-cysteinyl-[protein] + CoA. Its function is as follows. Endoplasmic reticulum palmitoyl acyltransferase that mediates palmitoylation of proteins such as AMFR, CALX, ITPR1 and TFRC. Palmitoylates calnexin (CALX), which is required for its association with the ribosome-translocon complex and efficient folding of glycosylated proteins. Mediates palmitoylation of AMFR, promoting AMFR distribution to the peripheral endoplasmic reticulum. Together with SELENOK, palmitoylates ITPR1 in immune cells, leading to regulate ITPR1 stability and function. Stearoyltransferase that mediates stearoylation of TFRC to inhibit TFRC-mediated activation of the JNK pathway and mitochondrial fragmentation. This Homo sapiens (Human) protein is Palmitoyltransferase ZDHHC6.